The chain runs to 289 residues: Ribosomal RNA small subunit methyltransferase A (289 aa).

S-adenosyl-L-methionine contacts are provided by His27, Leu29, Gly54, Glu76, Asp102, and Asn123.

Belongs to the class I-like SAM-binding methyltransferase superfamily. rRNA adenine N(6)-methyltransferase family. RsmA subfamily.

It is found in the cytoplasm. The catalysed reaction is adenosine(1518)/adenosine(1519) in 16S rRNA + 4 S-adenosyl-L-methionine = N(6)-dimethyladenosine(1518)/N(6)-dimethyladenosine(1519) in 16S rRNA + 4 S-adenosyl-L-homocysteine + 4 H(+). Specifically dimethylates two adjacent adenosines (A1518 and A1519) in the loop of a conserved hairpin near the 3'-end of 16S rRNA in the 30S particle. May play a critical role in biogenesis of 30S subunits. This is Ribosomal RNA small subunit methyltransferase A from Maricaulis maris (strain MCS10) (Caulobacter maris).